The following is a 183-amino-acid chain: Large ribosomal subunit protein uL5 (183 aa).

The protein belongs to the universal ribosomal protein uL5 family. In terms of assembly, part of the 50S ribosomal subunit; part of the 5S rRNA/L5/L18/L25 subcomplex. Contacts the 5S rRNA and the P site tRNA. Forms a bridge to the 30S subunit in the 70S ribosome.

Its function is as follows. This is one of the proteins that bind and probably mediate the attachment of the 5S RNA into the large ribosomal subunit, where it forms part of the central protuberance. In the 70S ribosome it contacts protein S13 of the 30S subunit (bridge B1b), connecting the 2 subunits; this bridge is implicated in subunit movement. Contacts the P site tRNA; the 5S rRNA and some of its associated proteins might help stabilize positioning of ribosome-bound tRNAs. In Tropheryma whipplei (strain TW08/27) (Whipple's bacillus), this protein is Large ribosomal subunit protein uL5.